Here is a 422-residue protein sequence, read N- to C-terminus: F-box protein At3g12350 (422 aa).

One can recognise an F-box domain in the interval 5 to 52; that stretch reads ALPFCEIPEDLQLRILSLLTPAEISSFACTSKRFASLCQEDGKIWHVM. Basic and acidic residues-rich tracts occupy residues 197-207 and 242-252; these read NNRREDQRSSG and KEKERQASRTK. Disordered stretches follow at residues 197 to 216 and 226 to 252; these read NNRREDQRSSGDESDDLISS and LANKTSPGGDRRRQKRKEKERQASRTK.

The sequence is that of F-box protein At3g12350 from Arabidopsis thaliana (Mouse-ear cress).